A 301-amino-acid polypeptide reads, in one-letter code: UDP-N-acetylenolpyruvoylglucosamine reductase 1 (301 aa).

Residues 29–196 enclose the FAD-binding PCMH-type domain; it reads KIGGPADILI…LEAEFQLQIG (168 aa). The active site involves Arg174. Ser225 acts as the Proton donor in catalysis. The active site involves Glu295.

Belongs to the MurB family. The cofactor is FAD.

The protein localises to the cytoplasm. It catalyses the reaction UDP-N-acetyl-alpha-D-muramate + NADP(+) = UDP-N-acetyl-3-O-(1-carboxyvinyl)-alpha-D-glucosamine + NADPH + H(+). It functions in the pathway cell wall biogenesis; peptidoglycan biosynthesis. In terms of biological role, cell wall formation. This is UDP-N-acetylenolpyruvoylglucosamine reductase 1 from Bacillus cereus (strain ZK / E33L).